The primary structure comprises 238 residues: Large ribosomal subunit protein uL1 (238 aa).

It belongs to the universal ribosomal protein uL1 family. Part of the 50S ribosomal subunit.

Binds directly to 23S rRNA. The L1 stalk is quite mobile in the ribosome, and is involved in E site tRNA release. Functionally, protein L1 is also a translational repressor protein, it controls the translation of the L11 operon by binding to its mRNA. The chain is Large ribosomal subunit protein uL1 from Salinispora tropica (strain ATCC BAA-916 / DSM 44818 / JCM 13857 / NBRC 105044 / CNB-440).